Here is a 515-residue protein sequence, read N- to C-terminus: uncharacterized protein (515 aa).

Disordered stretches follow at residues 117 to 188 (DNIL…RKSQ), 362 to 453 (RSTS…AESM), and 496 to 515 (GNAVQEADTESMDDFMDYFN). 3 stretches are compositionally biased toward basic and acidic residues: residues 370–380 (KNVESETKQEE), 388–402 (PAEDETPPMKEEVIE), and 428–438 (PIKEIEDKVEP). Residues 502–515 (ADTESMDDFMDYFN) show a composition bias toward acidic residues.

This is an uncharacterized protein from Ostreid herpesvirus 1 (isolate France) (OsHV-1).